Reading from the N-terminus, the 730-residue chain is Tubulin polyglutamylase ttll-5 (730 aa).

A TTL domain is found at 120–478; it reads RLRLTFKMMR…PLLDRKIIDS (359 aa). Residues 278 to 281, Lys-291, and Asp-293 contribute to the ATP site; that span reads SRYL. The tract at residues 594 to 618 is disordered; that stretch reads KKNTKNSSGSSKASSSSASASSSSS. The span at 600 to 618 shows a compositional bias: low complexity; sequence SSGSSKASSSSASASSSSS.

Belongs to the tubulin--tyrosine ligase family. In terms of tissue distribution, expressed in body wall muscles. Not expressed in sensory neurons.

The enzyme catalyses L-glutamyl-[protein] + L-glutamate + ATP = gamma-L-glutamyl-L-glutamyl-[protein] + ADP + phosphate + H(+). In terms of biological role, polyglutamylase which preferentially modifies alpha-tubulin. Involved in the side-chain initiation step of the polyglutamylation reaction rather than in the elongation step. Together with ttll-4 and ttll-11, required for male mating. Probably by regulating microtubule stability via the glutamylation of tubulin, negatively regulates axon regrowth after injury in PLM neurons. The chain is Tubulin polyglutamylase ttll-5 from Caenorhabditis elegans.